A 435-amino-acid polypeptide reads, in one-letter code: AP-2 complex subunit mu (435 aa).

The region spanning 170 to 434 (RNELFLDVLE…IGRSGIYETR (265 aa)) is the MHD domain. Positions 341, 345, and 354 each coordinate a 1,2-diacyl-sn-glycero-3-phospho-(1D-myo-inositol-3,4,5-trisphosphate).

The protein belongs to the adaptor complexes medium subunit family. As to quaternary structure, adaptor protein complex 2 (AP-2) is a heterotetramer composed of two large adaptins (alpha-type subunit and beta-type subunit), a medium adaptin (mu-type subunit) and a small adaptin (sigma-type subunit).

The protein localises to the cell membrane. It localises to the membrane. Its subcellular location is the coated pit. Functionally, component of the adaptor complexes which link clathrin to receptors in coated vesicles. Clathrin-associated protein complexes are believed to interact with the cytoplasmic tails of membrane proteins, leading to their selection and concentration. AP50 is a subunit of the plasma membrane adaptor. The complex binds polyphosphoinositide-containing lipids. This Xenopus laevis (African clawed frog) protein is AP-2 complex subunit mu (ap2m1).